Consider the following 473-residue polypeptide: 3-isopropylmalate dehydratase large subunit (473 aa).

Residues C348, C413, and C416 each contribute to the [4Fe-4S] cluster site.

Belongs to the aconitase/IPM isomerase family. LeuC type 1 subfamily. Heterodimer of LeuC and LeuD. It depends on [4Fe-4S] cluster as a cofactor.

It carries out the reaction (2R,3S)-3-isopropylmalate = (2S)-2-isopropylmalate. Its pathway is amino-acid biosynthesis; L-leucine biosynthesis; L-leucine from 3-methyl-2-oxobutanoate: step 2/4. Catalyzes the isomerization between 2-isopropylmalate and 3-isopropylmalate, via the formation of 2-isopropylmaleate. This Parvibaculum lavamentivorans (strain DS-1 / DSM 13023 / NCIMB 13966) protein is 3-isopropylmalate dehydratase large subunit.